The sequence spans 1066 residues: Isoleucine--tRNA ligase (1066 aa).

Positions 49–59 match the 'HIGH' region motif; the sequence is PYVSGAIHLGT. Residues 625 to 629 carry the 'KMSKS' region motif; it reads KMSKS. Position 628 (lysine 628) interacts with ATP.

Belongs to the class-I aminoacyl-tRNA synthetase family. IleS type 2 subfamily. As to quaternary structure, monomer. It depends on Zn(2+) as a cofactor.

It is found in the cytoplasm. The catalysed reaction is tRNA(Ile) + L-isoleucine + ATP = L-isoleucyl-tRNA(Ile) + AMP + diphosphate. In terms of biological role, catalyzes the attachment of isoleucine to tRNA(Ile). As IleRS can inadvertently accommodate and process structurally similar amino acids such as valine, to avoid such errors it has two additional distinct tRNA(Ile)-dependent editing activities. One activity is designated as 'pretransfer' editing and involves the hydrolysis of activated Val-AMP. The other activity is designated 'posttransfer' editing and involves deacylation of mischarged Val-tRNA(Ile). The chain is Isoleucine--tRNA ligase from Pyrococcus horikoshii (strain ATCC 700860 / DSM 12428 / JCM 9974 / NBRC 100139 / OT-3).